Reading from the N-terminus, the 331-residue chain is Ferrochelatase (331 aa).

Positions 187 and 286 each coordinate Fe cation.

This sequence belongs to the ferrochelatase family.

Its subcellular location is the cytoplasm. It carries out the reaction heme b + 2 H(+) = protoporphyrin IX + Fe(2+). The protein operates within porphyrin-containing compound metabolism; protoheme biosynthesis; protoheme from protoporphyrin-IX: step 1/1. Catalyzes the ferrous insertion into protoporphyrin IX. The chain is Ferrochelatase from Legionella pneumophila (strain Lens).